The primary structure comprises 201 residues: MANILFIDNFDSFTYNLVDQFRSLGHVVTIYRNNLSADAIEQALLQLDNPVVVLSPGPGAPSETGCMPELLQRLKGKVPMIGICLGHQAIVEAYGGVVAGAGEIIHGKVSMMEHQNHAIYRGLPSPLAIARYHSLVATQVPSALTVTAEVNGLVMSVVNEADKVCGFQFHPESIMTTHGATLLANAIDWALSSTPAQTQFA.

One can recognise a Glutamine amidotransferase type-1 domain in the interval 3-196; it reads NILFIDNFDS…IDWALSSTPA (194 aa). 57-59 is an L-glutamine binding site; that stretch reads GPG. Catalysis depends on Cys-84, which acts as the Nucleophile; for GATase activity. Residues Gln-88 and 134–135 each bind L-glutamine; that span reads SL. Residues His-170 and Glu-172 each act as for GATase activity in the active site.

In terms of assembly, heterotetramer consisting of two non-identical subunits: a beta subunit (TrpG) and a large alpha subunit (TrpE).

It carries out the reaction chorismate + L-glutamine = anthranilate + pyruvate + L-glutamate + H(+). It participates in amino-acid biosynthesis; L-tryptophan biosynthesis; L-tryptophan from chorismate: step 1/5. Its function is as follows. Part of a heterotetrameric complex that catalyzes the two-step biosynthesis of anthranilate, an intermediate in the biosynthesis of L-tryptophan. In the first step, the glutamine-binding beta subunit (TrpG) of anthranilate synthase (AS) provides the glutamine amidotransferase activity which generates ammonia as a substrate that, along with chorismate, is used in the second step, catalyzed by the large alpha subunit of AS (TrpE) to produce anthranilate. In the absence of TrpG, TrpE can synthesize anthranilate directly from chorismate and high concentrations of ammonia. In Vibrio cholerae serotype O1 (strain ATCC 39315 / El Tor Inaba N16961), this protein is Anthranilate synthase component 2 (trpG).